Reading from the N-terminus, the 150-residue chain is D-aminoacyl-tRNA deacylase (150 aa).

The Gly-cisPro motif, important for rejection of L-amino acids motif lies at 138-139 (GP).

Belongs to the DTD family. In terms of assembly, homodimer.

Its subcellular location is the cytoplasm. The catalysed reaction is glycyl-tRNA(Ala) + H2O = tRNA(Ala) + glycine + H(+). It carries out the reaction a D-aminoacyl-tRNA + H2O = a tRNA + a D-alpha-amino acid + H(+). In terms of biological role, an aminoacyl-tRNA editing enzyme that deacylates mischarged D-aminoacyl-tRNAs. Also deacylates mischarged glycyl-tRNA(Ala), protecting cells against glycine mischarging by AlaRS. Acts via tRNA-based rather than protein-based catalysis; rejects L-amino acids rather than detecting D-amino acids in the active site. By recycling D-aminoacyl-tRNA to D-amino acids and free tRNA molecules, this enzyme counteracts the toxicity associated with the formation of D-aminoacyl-tRNA entities in vivo and helps enforce protein L-homochirality. The chain is D-aminoacyl-tRNA deacylase from Chromobacterium violaceum (strain ATCC 12472 / DSM 30191 / JCM 1249 / CCUG 213 / NBRC 12614 / NCIMB 9131 / NCTC 9757 / MK).